The primary structure comprises 728 residues: Procollagen-lysine,2-oxoglutarate 5-dioxygenase 1 (728 aa).

The N-terminal stretch at 1–18 (MRSLLLLAPLAWLLLVQA) is a signal peptide. N-linked (GlcNAc...) asparagine glycosylation is found at N198 and N539. One can recognise a Fe2OG dioxygenase domain in the interval 637-728 (QFDLAFVVRY…RYIAVSFVDP (92 aa)). Positions 657 and 659 each coordinate Fe cation. N-linked (GlcNAc...) asparagine glycosylation occurs at N687. A Fe cation-binding site is contributed by H709. The active site involves R719.

Homodimer. Identified in a complex with P3H3 and P3H4. The cofactor is Fe(2+). L-ascorbate serves as cofactor. Highly expressed in the liver, heart, lung, skeletal muscle and kidney.

The protein resides in the rough endoplasmic reticulum membrane. It catalyses the reaction L-lysyl-[collagen] + 2-oxoglutarate + O2 = (5R)-5-hydroxy-L-lysyl-[collagen] + succinate + CO2. In terms of biological role, part of a complex composed of PLOD1, P3H3 and P3H4 that catalyzes hydroxylation of lysine residues in collagen alpha chains and is required for normal assembly and cross-linkling of collagen fibrils. Forms hydroxylysine residues in -Xaa-Lys-Gly- sequences in collagens. These hydroxylysines serve as sites of attachment for carbohydrate units and are essential for the stability of the intermolecular collagen cross-links. This Mus musculus (Mouse) protein is Procollagen-lysine,2-oxoglutarate 5-dioxygenase 1 (Plod1).